The primary structure comprises 899 residues: Origin recognition complex subunit 5 (899 aa).

Disordered stretches follow at residues 27-47, 100-166, and 194-238; these read FSSP…NDDT, DRIN…EYKD, and KNLE…DGNL. Residues 105–160 are compositionally biased toward acidic residues; the sequence is SEEETNINDDNNDDNNGDYDDDNNSDDDDDNDDNNNNDDNNNDDDEDVDDFEDIKE. The span at 207 to 218 shows a compositional bias: low complexity; that stretch reads SSDNSMTSSSEE. The span at 227-237 shows a compositional bias: basic and acidic residues; the sequence is ESDKESDKDGN. 303-310 contributes to the ATP binding site; that stretch reads GLPGMGKT. Positions 409 to 469 are disordered; it reads KRTTENIRSP…NNNSNNVRFN (61 aa). Over residues 455–469 the composition is skewed to low complexity; that stretch reads KNNFNNNNSNNVRFN.

It belongs to the ORC5 family. As to quaternary structure, component of the origin recognition complex (ORC). Interacts with PCNA1; the interaction occurs during the trophozoite stage but not at the late schizont stage.

It localises to the nucleus. It carries out the reaction ATP + H2O = ADP + phosphate + H(+). Its function is as follows. Component of the origin recognition complex (ORC) that binds origins of replication. This chain is Origin recognition complex subunit 5, found in Plasmodium falciparum (isolate 3D7).